Consider the following 371-residue polypeptide: Spermidine/putrescine import ATP-binding protein PotA (371 aa).

An ABC transporter domain is found at 10 to 240 (VELRNVTKSY…PKNLFVARFI (231 aa)). 42–49 (GPSGCGKT) is a binding site for ATP.

Belongs to the ABC transporter superfamily. Spermidine/putrescine importer (TC 3.A.1.11.1) family. As to quaternary structure, the complex is composed of two ATP-binding proteins (PotA), two transmembrane proteins (PotB and PotC) and a solute-binding protein (PotD).

It is found in the cell inner membrane. It catalyses the reaction ATP + H2O + polyamine-[polyamine-binding protein]Side 1 = ADP + phosphate + polyamineSide 2 + [polyamine-binding protein]Side 1.. In terms of biological role, part of the ABC transporter complex PotABCD involved in spermidine/putrescine import. Responsible for energy coupling to the transport system. This is Spermidine/putrescine import ATP-binding protein PotA from Haemophilus ducreyi (strain 35000HP / ATCC 700724).